We begin with the raw amino-acid sequence, 500 residues long: Dipeptide and tripeptide permease A (500 aa).

Over Met1–Lys21 the chain is Cytoplasmic. Residues Ala22–Met44 traverse the membrane as a helical segment. Residues Ala45–Ser59 are Periplasmic-facing. A helical membrane pass occupies residues Ile60–Leu80. Residues Gly81–Arg89 are Cytoplasmic-facing. Residues Val90–His110 traverse the membrane as a helical segment. A topological domain (periplasmic) is located at residue Asp111. Residues Ala112–Asn132 form a helical membrane-spanning segment. Topologically, residues Pro133–Thr153 are cytoplasmic. A helical transmembrane segment spans residues Met154 to Ala174. At Ala175 to Gly178 the chain is on the periplasmic side. The helical transmembrane segment at Trp179–Phe199 threads the bilayer. At Cys200 to Arg219 the chain is on the cytoplasmic side. Residues Asn220–His240 traverse the membrane as a helical segment. Residues Asn241–Arg246 are Periplasmic-facing. The chain crosses the membrane as a helical span at residues Met247–Met267. Topologically, residues Lys268 to Lys274 are cytoplasmic. Residues Met275–Met295 traverse the membrane as a helical segment. The Periplasmic portion of the chain corresponds to Pro296–Gln320. The chain crosses the membrane as a helical span at residues Tyr321–Asn341. Residues Lys342 to Lys352 lie on the Cytoplasmic side of the membrane. A helical transmembrane segment spans residues Phe353–Phe373. Residues Ala374–Gly378 lie on the Periplasmic side of the membrane. A helical membrane pass occupies residues Ile379–Ile399. At Ser400–Arg414 the chain is on the cytoplasmic side. The helical transmembrane segment at Leu415–Gly435 threads the bilayer. The Periplasmic portion of the chain corresponds to Tyr436–Arg459. The helical transmembrane segment at Val460–Pro480 threads the bilayer. Residues Lys481–Ala500 are Cytoplasmic-facing.

This sequence belongs to the major facilitator superfamily. Proton-dependent oligopeptide transporter (POT/PTR) (TC 2.A.17) family. DtpA subfamily. As to quaternary structure, monomer. Has a crown-like structure with a diameter of 8 nm and a central density.

Its subcellular location is the cell inner membrane. Functionally, proton-dependent permease that transports di- and tripeptides as well as structurally related peptidomimetics such as aminocephalosporins into the cell. Has a clear preference for dipeptides and tripeptides composed of L-amino acids, and discriminates dipeptides on the basis of the position of charges within the substrate. In Escherichia coli (strain K12), this protein is Dipeptide and tripeptide permease A (dtpA).